The sequence spans 470 residues: DNA primase large subunit (470 aa).

The [4Fe-4S] cluster site is built by C279, C358, C376, and C414. Positions 449–470 are disordered; that stretch reads EEKKSAKQSNNKENENQSIDEK.

It belongs to the eukaryotic-type primase large subunit family. In terms of assembly, heterodimer of a small subunit and a large subunit. Requires [4Fe-4S] cluster as cofactor.

Functionally, DNA primase is the polymerase that synthesizes small RNA primers for the Okazaki fragments made during discontinuous DNA replication. This is DNA primase large subunit (prim2) from Dictyostelium discoideum (Social amoeba).